Reading from the N-terminus, the 360-residue chain is MTVLPDLLDFDPDAALALLGEWMAARGEPAYRAAQVFGRLWQRPVRSFDEMTELPKALREGLAGSFRITALELTTRQKSMDGTEKFLFRMHDGQLIETVAIPDGDRLTFCISSQAGCALQCAFCATGAMGFQRNLHPSEIAGQVRELRMLTPSIVPTNIVFMGMGEPLMNWKAVSPTLSLLNDPRALGIGARHITISTVGVLPGIVALAARPEQFRLAISIHAPSDALRRTLMPVNTKYPLADVIAAAREFDRRVTFEYVMLGGVNDQPEHAAQLAQLARDCRAFVNLIPLHPGGSMGFSPSTTPTINAFAKAIRARGVETAVRRSRGLDIAAACGQLRTERLGRRLPVAAQDHGEVHVA.

Glutamate 97 serves as the catalytic Proton acceptor. The Radical SAM core domain occupies 103 to 330 (DGDRLTFCIS…TAVRRSRGLD (228 aa)). Residues cysteine 110 and cysteine 335 are joined by a disulfide bond. [4Fe-4S] cluster is bound by residues cysteine 117, cysteine 121, and cysteine 124. Residues 165 to 166 (GE), serine 197, 220 to 222 (SIH), and histidine 292 each bind S-adenosyl-L-methionine. Cysteine 335 (S-methylcysteine intermediate) is an active-site residue.

This sequence belongs to the radical SAM superfamily. RlmN family. [4Fe-4S] cluster is required as a cofactor.

The protein resides in the cytoplasm. The enzyme catalyses adenosine(2503) in 23S rRNA + 2 reduced [2Fe-2S]-[ferredoxin] + 2 S-adenosyl-L-methionine = 2-methyladenosine(2503) in 23S rRNA + 5'-deoxyadenosine + L-methionine + 2 oxidized [2Fe-2S]-[ferredoxin] + S-adenosyl-L-homocysteine. The catalysed reaction is adenosine(37) in tRNA + 2 reduced [2Fe-2S]-[ferredoxin] + 2 S-adenosyl-L-methionine = 2-methyladenosine(37) in tRNA + 5'-deoxyadenosine + L-methionine + 2 oxidized [2Fe-2S]-[ferredoxin] + S-adenosyl-L-homocysteine. Specifically methylates position 2 of adenine 2503 in 23S rRNA and position 2 of adenine 37 in tRNAs. This Gemmatimonas aurantiaca (strain DSM 14586 / JCM 11422 / NBRC 100505 / T-27) protein is Probable dual-specificity RNA methyltransferase RlmN.